The following is a 583-amino-acid chain: Pentatricopeptide repeat-containing protein At3g59040 (583 aa).

PPR repeat units follow at residues serine 138–proline 172, asparagine 173–proline 207, serine 208–proline 242, aspartate 246–glutamine 280, serine 281–proline 312, aspartate 313–proline 347, threonine 348–proline 382, aspartate 383–proline 417, asparagine 418–alanine 452, and asparagine 453–proline 487. Residues valine 525–leucine 583 form a disordered region. Over residues serine 528–alanine 556 the composition is skewed to acidic residues. Basic and acidic residues predominate over residues arginine 557–glutamine 566.

Belongs to the PPR family. P subfamily.

This chain is Pentatricopeptide repeat-containing protein At3g59040, found in Arabidopsis thaliana (Mouse-ear cress).